Here is a 540-residue protein sequence, read N- to C-terminus: Glucose-6-phosphate isomerase (540 aa).

Glu350 acts as the Proton donor in catalysis. Catalysis depends on residues His381 and Lys503.

It belongs to the GPI family.

The protein resides in the cytoplasm. It catalyses the reaction alpha-D-glucose 6-phosphate = beta-D-fructose 6-phosphate. The protein operates within carbohydrate biosynthesis; gluconeogenesis. It participates in carbohydrate degradation; glycolysis; D-glyceraldehyde 3-phosphate and glycerone phosphate from D-glucose: step 2/4. Functionally, catalyzes the reversible isomerization of glucose-6-phosphate to fructose-6-phosphate. The sequence is that of Glucose-6-phosphate isomerase from Burkholderia lata (strain ATCC 17760 / DSM 23089 / LMG 22485 / NCIMB 9086 / R18194 / 383).